Consider the following 1296-residue polypeptide: Phosphoribosylformylglycinamidine synthase (1296 aa).

The tract at residues 304–323 (WPGAATGSGGEIRDEGATGR) is disordered. ATP-binding positions include 306–317 (GAATGSGGEIRD) and Ala-677. The Mg(2+) site is built by Asp-678, Glu-717, Asn-721, and Asp-885. Ser-887 is an ATP binding site. Over residues 1000 to 1013 (PDCADQEHQAKQDE) the composition is skewed to basic and acidic residues. Positions 1000 to 1019 (PDCADQEHQAKQDESDPGLN) are disordered. Residues 1043–1296 (VAVLREQGVN…MFRNARKQLG (254 aa)) form the Glutamine amidotransferase type-1 domain. Cys-1136 functions as the Nucleophile in the catalytic mechanism. Residues His-1261 and Glu-1263 contribute to the active site.

This sequence in the N-terminal section; belongs to the FGAMS family. Monomer.

It localises to the cytoplasm. It carries out the reaction N(2)-formyl-N(1)-(5-phospho-beta-D-ribosyl)glycinamide + L-glutamine + ATP + H2O = 2-formamido-N(1)-(5-O-phospho-beta-D-ribosyl)acetamidine + L-glutamate + ADP + phosphate + H(+). It participates in purine metabolism; IMP biosynthesis via de novo pathway; 5-amino-1-(5-phospho-D-ribosyl)imidazole from N(2)-formyl-N(1)-(5-phospho-D-ribosyl)glycinamide: step 1/2. Its function is as follows. Phosphoribosylformylglycinamidine synthase involved in the purines biosynthetic pathway. Catalyzes the ATP-dependent conversion of formylglycinamide ribonucleotide (FGAR) and glutamine to yield formylglycinamidine ribonucleotide (FGAM) and glutamate. This is Phosphoribosylformylglycinamidine synthase from Yersinia pseudotuberculosis serotype I (strain IP32953).